Here is a 382-residue protein sequence, read N- to C-terminus: Lipid-A-disaccharide synthase (382 aa).

It belongs to the LpxB family.

The enzyme catalyses 2-N,3-O-bis[(3R)-3-hydroxytetradecanoyl]-alpha-D-glucosaminyl 1-phosphate + UDP-2-N,3-O-bis[(3R)-3-hydroxytetradecanoyl]-alpha-D-glucosamine = lipid A disaccharide (E. coli) + UDP + H(+). It catalyses the reaction a lipid X + a UDP-2-N,3-O-bis[(3R)-3-hydroxyacyl]-alpha-D-glucosamine = a lipid A disaccharide + UDP + H(+). It participates in glycolipid biosynthesis; lipid IV(A) biosynthesis; lipid IV(A) from (3R)-3-hydroxytetradecanoyl-[acyl-carrier-protein] and UDP-N-acetyl-alpha-D-glucosamine: step 5/6. Its function is as follows. Condensation of UDP-2,3-diacylglucosamine and 2,3-diacylglucosamine-1-phosphate to form lipid A disaccharide, a precursor of lipid A, a phosphorylated glycolipid that anchors the lipopolysaccharide to the outer membrane of the cell. In Salmonella paratyphi A (strain AKU_12601), this protein is Lipid-A-disaccharide synthase.